Consider the following 428-residue polypeptide: 3-phosphoshikimate 1-carboxyvinyltransferase (428 aa).

K21, S22, and R26 together coordinate 3-phosphoshikimate. Residue K21 participates in phosphoenolpyruvate binding. The phosphoenolpyruvate site is built by G91 and R119. The 3-phosphoshikimate site is built by S164, Q166, D311, and K338. Q166 is a phosphoenolpyruvate binding site. Residue D311 is the Proton acceptor of the active site. Residues R342 and R383 each contribute to the phosphoenolpyruvate site.

This sequence belongs to the EPSP synthase family. In terms of assembly, monomer.

The protein resides in the cytoplasm. It carries out the reaction 3-phosphoshikimate + phosphoenolpyruvate = 5-O-(1-carboxyvinyl)-3-phosphoshikimate + phosphate. It participates in metabolic intermediate biosynthesis; chorismate biosynthesis; chorismate from D-erythrose 4-phosphate and phosphoenolpyruvate: step 6/7. Functionally, catalyzes the transfer of the enolpyruvyl moiety of phosphoenolpyruvate (PEP) to the 5-hydroxyl of shikimate-3-phosphate (S3P) to produce enolpyruvyl shikimate-3-phosphate and inorganic phosphate. This chain is 3-phosphoshikimate 1-carboxyvinyltransferase, found in Campylobacter concisus (strain 13826).